Reading from the N-terminus, the 490-residue chain is Glutamate--tRNA ligase (490 aa).

Positions 13 to 23 match the 'HIGH' region motif; that stretch reads PSPTGTPHVGL. The short motif at 257 to 261 is the 'KMSKS' region element; the sequence is KLSKR. Lysine 260 is a binding site for ATP.

This sequence belongs to the class-I aminoacyl-tRNA synthetase family. Glutamate--tRNA ligase type 1 subfamily. In terms of assembly, monomer.

It is found in the cytoplasm. It catalyses the reaction tRNA(Glu) + L-glutamate + ATP = L-glutamyl-tRNA(Glu) + AMP + diphosphate. Functionally, catalyzes the attachment of glutamate to tRNA(Glu) in a two-step reaction: glutamate is first activated by ATP to form Glu-AMP and then transferred to the acceptor end of tRNA(Glu). This chain is Glutamate--tRNA ligase, found in Mycobacterium tuberculosis (strain ATCC 25177 / H37Ra).